Here is a 605-residue protein sequence, read N- to C-terminus: MREVNFSIPNVNKASVNITTTLYDRRALDCTSTLPLINSLNHLAYLTTSSARIRDILTVDGGIERLVCILKEGRSRDLMEMWKWSLAFQCVVNIGVRGSESVRTRVVEADMVPVIATILDNYIKVVEKARARADSESQRHSSRHHSKAAPISSDAPSRPVYVDQSTNTEQRPSRRQAPPPHIEIPPFYQDSHASDSNAMDITSSPRVPVTSPPERSTFGQDAHNLRSNDTRYAHAAHRYRVMQPLATALPPMDAADGFGLRPVRDTERLPSMLPGFQNGLASQPDSPTTPSGPAQLRSNTQVAPARPRPTLRQQQSASGESDDGNGEGSTLGDDPGSGETAEPIVGIQNRMEIDDDGDRQTVLEGVSNTHDLTVNDTSESQEAETFNITHRSTVDGSMINNDATRTNGALGLSPTQAPNTANSPAVVPSPYSLYVRDRSTTAVQGVLTTMPKDEDVLMSLQLLAYVSKYCNLRSYFQHSHLVPKLKVDRELQMLEDGVSPIEPAEEEDEYLLPDDVNIFPLVEKFTVRHHSKDMQYWACVVMRNLCRKDESRGGIRQCAYYKCGKWEEFQRQFAKCRRCRRTKYCSKDCQKAAWVYHRHWCHTTP.

Disordered regions lie at residues 133–227 and 268–342; these read ADSE…NLRS and RLPS…ETAE. Residues 202-216 are compositionally biased toward low complexity; it reads TSSPRVPVTSPPERS. Residues 279–302 are compositionally biased toward polar residues; it reads GLASQPDSPTTPSGPAQLRSNTQV. An MYND-type; degenerate zinc finger spans residues 560–601; it reads YYKCGKWEEFQRQFAKCRRCRRTKYCSKDCQKAAWVYHRHWC. Residues Cys-576, Cys-579, His-597, and Cys-601 each contribute to the Zn(2+) site.

The protein belongs to the MUB1/samB family.

It is found in the cytoplasm. Functionally, involved in determination of the onset of polarized growth and morphogenesis. Plays a role in the regulation of branching in hyphae and spore formation. This is MYND-type zinc finger protein samB (samB) from Aspergillus niger (strain ATCC MYA-4892 / CBS 513.88 / FGSC A1513).